The following is a 467-amino-acid chain: tRNA dimethylallyltransferase (467 aa).

Residues 1–47 (MAAAAAARAVPVSSGFRGLRRTLPLVVILGATGTGKSTLALQLGQRL) constitute a mitochondrion transit peptide. 32 to 37 (TGTGKS) lines the dimethylallyl diphosphate pocket. Interaction with substrate tRNA stretches follow at residues 55–58 (DSMQ) and 183–187 (RKVAR). Positions 221–230 (FPNPCILWLH) are core aggregation region. The tract at residues 233–255 (QAVLDERLDKRVDDMLAAGLLEE) is interaction with isopentenylpyrophosphate transferase. 2 interaction with substrate tRNA regions span residues 281-283 (QSI) and 313-331 (ALKQ…WVKN). The segment at 395–425 (HMCDLCDRIIIGDREWAAHLKSKSHLHQLKK) adopts a Matrin-type zinc-finger fold. Residues 432-467 (DAVSATGSQSNSPDCDPERIEGESSGQHNQELKASV) are disordered. Phosphoserine is present on residues Ser-443 and Ser-455.

Belongs to the IPP transferase family.

The protein resides in the mitochondrion. It localises to the cytoplasm. It is found in the nucleus. It carries out the reaction adenosine(37) in tRNA + dimethylallyl diphosphate = N(6)-dimethylallyladenosine(37) in tRNA + diphosphate. Functionally, catalyzes the transfer of a dimethylallyl group onto the adenine at position 37 of both cytosolic and mitochondrial tRNAs, leading to the formation of N6-(dimethylallyl)adenosine (i6A37). Mediates modification of a limited subset of tRNAs: tRNA(Ser)(AGA), tRNA(Ser)(CGA), tRNA(Ser)(UGA), as well as partial modification of the selenocysteine tRNA(Ser)(UCA). TRIT1 is therefore required for selenoprotein expression. This is tRNA dimethylallyltransferase (Trit1) from Mus musculus (Mouse).